We begin with the raw amino-acid sequence, 363 residues long: Biotin synthase (363 aa).

A phosphoserine mark is found at serine 13, serine 14, and serine 17. In terms of domain architecture, Radical SAM core spans 54–276 (KKVQQCTLLS…IATARICMPK (223 aa)). [4Fe-4S] cluster-binding residues include cysteine 69, cysteine 73, and cysteine 76. Positions 113, 146, 206, and 280 each coordinate [2Fe-2S] cluster. Positions 337-363 (EYGTSTEGEDGTFTLPPKERLAPSPSL) are disordered.

Belongs to the radical SAM superfamily. Biotin synthase family. Requires [4Fe-4S] cluster as cofactor. It depends on [2Fe-2S] cluster as a cofactor.

The enzyme catalyses (4R,5S)-dethiobiotin + (sulfur carrier)-SH + 2 reduced [2Fe-2S]-[ferredoxin] + 2 S-adenosyl-L-methionine = (sulfur carrier)-H + biotin + 2 5'-deoxyadenosine + 2 L-methionine + 2 oxidized [2Fe-2S]-[ferredoxin]. It participates in cofactor biosynthesis; biotin biosynthesis; biotin from 7,8-diaminononanoate: step 2/2. In terms of biological role, catalyzes the last step of biotin biosynthesis, the conversion of dethiobiotin to biotin. This chain is Biotin synthase (bio2), found in Schizosaccharomyces pombe (strain 972 / ATCC 24843) (Fission yeast).